Here is a 940-residue protein sequence, read N- to C-terminus: Valine--tRNA ligase (940 aa).

A 'HIGH' region motif is present at residues 47–57; the sequence is PNVTGILHMGH. A 'KMSKS' region motif is present at residues 564 to 568; it reads KLSKS. K567 lines the ATP pocket. A coiled-coil region spans residues 873-937; that stretch reads VEHIAKEKTR…ELQSILDKLA (65 aa).

Belongs to the class-I aminoacyl-tRNA synthetase family. ValS type 1 subfamily. In terms of assembly, monomer.

Its subcellular location is the cytoplasm. The enzyme catalyses tRNA(Val) + L-valine + ATP = L-valyl-tRNA(Val) + AMP + diphosphate. Functionally, catalyzes the attachment of valine to tRNA(Val). As ValRS can inadvertently accommodate and process structurally similar amino acids such as threonine, to avoid such errors, it has a 'posttransfer' editing activity that hydrolyzes mischarged Thr-tRNA(Val) in a tRNA-dependent manner. The chain is Valine--tRNA ligase from Chlamydia abortus (strain DSM 27085 / S26/3) (Chlamydophila abortus).